The chain runs to 244 residues: Transcriptional regulatory protein AruR (244 aa).

Residues 6–124 (RVLVVDDDPV…ELVSRAKNLI (119 aa)) form the Response regulatory domain. D60 is subject to 4-aspartylphosphate. A DNA-binding region (ompR/PhoB-type) is located at residues 139 to 239 (QALRQFGDWL…IHGAGYLFTA (101 aa)).

Post-translationally, phosphorylated by AruS.

It localises to the cytoplasm. It functions in the pathway amino-acid degradation; L-arginine degradation [regulation]. Its function is as follows. Member of the two-component regulatory system AruS/AruR, which is involved in the regulation of the arginine transaminase (ATA) pathway in response to exogeneous L-arginine. Regulates transcription of aruH and aruI. The chain is Transcriptional regulatory protein AruR (aruR) from Pseudomonas aeruginosa (strain ATCC 15692 / DSM 22644 / CIP 104116 / JCM 14847 / LMG 12228 / 1C / PRS 101 / PAO1).